A 177-amino-acid polypeptide reads, in one-letter code: NADH-quinone oxidoreductase subunit B (177 aa).

[4Fe-4S] cluster-binding residues include Cys56, Cys57, Cys121, and Cys151.

Belongs to the complex I 20 kDa subunit family. As to quaternary structure, NDH-1 is composed of 14 different subunits. Subunits NuoB, C, D, E, F, and G constitute the peripheral sector of the complex. [4Fe-4S] cluster is required as a cofactor.

The protein localises to the cell inner membrane. The enzyme catalyses a quinone + NADH + 5 H(+)(in) = a quinol + NAD(+) + 4 H(+)(out). NDH-1 shuttles electrons from NADH, via FMN and iron-sulfur (Fe-S) centers, to quinones in the respiratory chain. Couples the redox reaction to proton translocation (for every two electrons transferred, four hydrogen ions are translocated across the cytoplasmic membrane), and thus conserves the redox energy in a proton gradient. This Dinoroseobacter shibae (strain DSM 16493 / NCIMB 14021 / DFL 12) protein is NADH-quinone oxidoreductase subunit B.